Here is a 353-residue protein sequence, read N- to C-terminus: Ubiquinol oxidase 1, mitochondrial (353 aa).

Residues 1–69 (MMTRGATRMT…RHFPVMGSRS (69 aa)) constitute a mitochondrion transit peptide. The disordered stretch occupies residues 77–99 (DKQHDKKAENGSAAATGGGDGGD). The chain crosses the membrane as a helical span at residues 178-198 (AMMLETVAAVPGMVGGMLLHC). Fe cation contacts are provided by Glu182, Glu221, and His224. A helical transmembrane segment spans residues 240–260 (ALVFAVQGVFFNAYFVTYLLS). Glu272, Glu323, and His326 together coordinate Fe cation.

Belongs to the alternative oxidase family. As to quaternary structure, homodimer; disulfide-linked. It depends on Fe cation as a cofactor.

It localises to the mitochondrion inner membrane. It catalyses the reaction 2 a ubiquinol + O2 = 2 a ubiquinone + 2 H2O. Stimulated by reduction of the disulfide bond and the presence of pyruvate. Its function is as follows. Catalyzes the cyanide-resistant oxidation of ubiquinol and the reduction of molecular oxygen to water, but does not translocate protons and consequently is not linked to oxidative phosphorylation. May increase respiration when the cytochrome respiratory pathway is restricted, or in response to low temperatures. In Nicotiana tabacum (Common tobacco), this protein is Ubiquinol oxidase 1, mitochondrial (AOX1).